A 244-amino-acid polypeptide reads, in one-letter code: Orotidine 5'-phosphate decarboxylase (244 aa).

Residues Asp12, Lys34, 61 to 70, Thr125, Arg187, Gln196, Gly216, and Arg217 contribute to the substrate site; that span reads DLKLFDIPNT. Catalysis depends on Lys63, which acts as the Proton donor.

Belongs to the OMP decarboxylase family. Type 1 subfamily. As to quaternary structure, homodimer.

The enzyme catalyses orotidine 5'-phosphate + H(+) = UMP + CO2. It participates in pyrimidine metabolism; UMP biosynthesis via de novo pathway; UMP from orotate: step 2/2. Functionally, catalyzes the decarboxylation of orotidine 5'-monophosphate (OMP) to uridine 5'-monophosphate (UMP). This is Orotidine 5'-phosphate decarboxylase from Dictyoglomus turgidum (strain DSM 6724 / Z-1310).